The following is a 442-amino-acid chain: uncharacterized protein (442 aa).

The next 7 membrane-spanning stretches (helical) occupy residues Phe-209–Tyr-229, Ile-247–Ser-267, Val-284–Cys-304, Leu-308–Trp-328, Ile-342–Ile-362, Pro-374–Pro-394, and Phe-402–Phe-422.

It localises to the membrane. This is an uncharacterized protein from Schizosaccharomyces pombe (strain 972 / ATCC 24843) (Fission yeast).